A 239-amino-acid chain; its full sequence is tRNA (guanine-N(1)-)-methyltransferase (239 aa).

Residues Gly108 and 127–132 (LGDFVL) contribute to the S-adenosyl-L-methionine site.

Belongs to the RNA methyltransferase TrmD family. As to quaternary structure, homodimer.

The protein resides in the cytoplasm. It catalyses the reaction guanosine(37) in tRNA + S-adenosyl-L-methionine = N(1)-methylguanosine(37) in tRNA + S-adenosyl-L-homocysteine + H(+). In terms of biological role, specifically methylates guanosine-37 in various tRNAs. The sequence is that of tRNA (guanine-N(1)-)-methyltransferase from Streptococcus thermophilus (strain ATCC BAA-250 / LMG 18311).